A 147-amino-acid polypeptide reads, in one-letter code: Large ribosomal subunit protein uL13 (147 aa).

It belongs to the universal ribosomal protein uL13 family. Part of the 50S ribosomal subunit.

Functionally, this protein is one of the early assembly proteins of the 50S ribosomal subunit, although it is not seen to bind rRNA by itself. It is important during the early stages of 50S assembly. This is Large ribosomal subunit protein uL13 from Mycobacterium marinum (strain ATCC BAA-535 / M).